A 390-amino-acid polypeptide reads, in one-letter code: MSASGFTSPFGANSNPFGSPEERRGVAGSIQPVLEEEEADGIGSEPISFKSPGFRAPFGGGDANSEGPPSSRPQNPDGYPAQYNFARRTSVSAESLKPIADSYDNWTPPFHPKSAEQLDRLKKAIQGNFLFSHLDDEQSAQILGALVEKPIPAKDIKVIVQGDAGDYFYVVEKGKFSVHVNSSGVMQAGTQGLGDHVGTIEAGGSFGELALMYNAPRAATVMSAEPNCVLWALDRVTFRRILMESTFSRRRMYENFLEEVPILSTLTAYERSKIADALETQKYPPGTVVIKEGDPGEDFYLLECGEAEAFKAGIDQPVKLYKKGDFFGELALLNDAPRAASVVSKTEVKVAALGKSAFQRLLGPVEPIMRRTRYDAIKTGVEEMDPLQAA.

A compositionally biased stretch (polar residues) spans methionine 1–phenylalanine 17. Residues methionine 1 to alanine 81 are disordered. A dimerization and phosphorylation region spans residues methionine 1 to phenylalanine 129. Serine 90 bears the Phosphoserine mark. 3',5'-cyclic AMP is bound by residues leucine 130–proline 261, glutamate 208, arginine 217, isoleucine 262–glutamate 383, glutamate 329, and arginine 338.

Belongs to the cAMP-dependent kinase regulatory chain family. Tetramer, composed of 2 regulatory (R) and 2 catalytic (C) subunits. In the presence of cAMP it dissociates into 2 active monomeric C subunits and an R dimer.

The protein is cAMP-dependent protein kinase regulatory subunit (SUM1) of Pyricularia oryzae (strain 70-15 / ATCC MYA-4617 / FGSC 8958) (Rice blast fungus).